Reading from the N-terminus, the 415-residue chain is Packaging protein 3 (415 aa).

Residues 1-55 (MHPVLRQMRPPPQQRQEQEQRQTCRAPSPPPTASGGATSAVDAAADGDYEPPRRR) form a disordered region. Residues 1–173 (MHPVLRQMRP…VNQEINFQKS (173 aa)) are interaction with packaging protein 1. Residues Ser75 and Ser360 each carry the phosphoserine; by host modification. Over residues 381 to 394 (GAGPGLAVAPARAG) the composition is skewed to low complexity. The tract at residues 381 to 415 (GAGPGLAVAPARAGNVGGVEEYDEDDEYEPEDGEY) is disordered. Residues 400–415 (EEYDEDDEYEPEDGEY) show a composition bias toward acidic residues.

It belongs to the adenoviridae packaging protein 3 family. Part of the genome packaging complex composed of packaging proteins 1, 2 and 3; this complex specifically binds to the packaging sequence on the left end of viral genomic DNA and performs packaging of the viral genome. Interacts with hexon-linking protein IIIa; this interaction is required to promote correct genome packaging. Cleaved at different sites by the viral protease during virion maturation.

The protein localises to the host nucleus. Involved in viral genome packaging through its interaction with packaging proteins 1 and 2. After proteolytic cleavage by adenovirus protease, L1 52/55k protein is removed from the capsid during viral maturation. The protein is Packaging protein 3 of Homo sapiens (Human).